The following is a 709-amino-acid chain: Pentatricopeptide repeat-containing protein At5g42310, chloroplastic (709 aa).

The N-terminal 54 residues, 1–54, are a transit peptide targeting the chloroplast; it reads MLLLQQPPLVSTRFHSLYFLTHHHHHHHRFFQPPISAFSATTSASLPSPSPSSS. PPR repeat units follow at residues 196–230, 231–267, 268–302, 303–337, 338–372, 373–407, 408–442, 443–477, 478–512, 513–547, 548–582, 583–617, 618–652, and 653–687; these read TPLTYNALIGACARNNDIEKALNLIAKMRQDGYQS, DFVNYSLVIQSLTRSNKIDSVMLLRLYKEIERDKLEL, DVQLVNDIIMGFAKSGDPSKALQLLGMAQATGLSA, KTATLVSIISALADSGRTLEAEALFEELRQSGIKP, RTRAYNALLKGYVKTGPLKDAESMVSEMEKRGVSP, DEHTYSLLIDAYVNAGRWESARIVLKEMEAGDVQP, NSFVFSRLLAGFRDRGEWQKTFQVLKEMKSIGVKP, DRQFYNVVIDTFGKFNCLDHAMTTFDRMLSEGIEP, DRVTWNTLIDCHCKHGRHIVAEEMFEAMERRGCLP, CATTYNIMINSYGDQERWDDMKRLLGKMKSQGILP, NVVTHTTLVDVYGKSGRFNDAIECLEEMKSVGLKP, SSTMYNALINAYAQRGLSEQAVNAFRVMTSDGLKP, SLLALNSLINAFGEDRRDAEAFAVLQYMKENGVKP, and DVVTYTTLMKALIRVDKFQKVPVVYEEMIMSGCKP.

This sequence belongs to the PPR family. P subfamily. As to quaternary structure, interacts with PDE338.

It is found in the plastid. The protein resides in the chloroplast stroma. Its subcellular location is the chloroplast thylakoid. It localises to the chloroplast. Its function is as follows. Required for chloroplast protein synthesis and accumulation of subunits of the thylakoid protein complexes. Activates psaC and petA translation by binding their 5'-UTRs. Required for the correct processing of petB and petD mRNAs. Interacts with the petB and petD intergenic region and is required for the generation of petB and petD monocistronic RNAs. This Arabidopsis thaliana (Mouse-ear cress) protein is Pentatricopeptide repeat-containing protein At5g42310, chloroplastic.